Consider the following 159-residue polypeptide: Transcriptional repressor NrdR (159 aa).

A zinc finger lies at 3–34; sequence CPYCQSEDTQVKDSRPAEDGAAIRRRRVCPDC. Positions 49–139 constitute an ATP-cone domain; it reads LVVVKKSGRK…VYRNFREAKD (91 aa).

This sequence belongs to the NrdR family. Zn(2+) is required as a cofactor.

In terms of biological role, negatively regulates transcription of bacterial ribonucleotide reductase nrd genes and operons by binding to NrdR-boxes. The chain is Transcriptional repressor NrdR from Mesorhizobium japonicum (strain LMG 29417 / CECT 9101 / MAFF 303099) (Mesorhizobium loti (strain MAFF 303099)).